Consider the following 247-residue polypeptide: Probable transcriptional regulatory protein Glov_1245 (247 aa).

The protein belongs to the TACO1 family.

Its subcellular location is the cytoplasm. The chain is Probable transcriptional regulatory protein Glov_1245 from Trichlorobacter lovleyi (strain ATCC BAA-1151 / DSM 17278 / SZ) (Geobacter lovleyi).